A 2326-amino-acid chain; its full sequence is Nonribosomal peptide synthetase inpB (2326 aa).

Residues 8-84 enclose the Carrier 1 domain; the sequence is SPSEWLQLEL…SLYSMAQGPA (77 aa). S45 is modified (O-(pantetheine 4'-phosphoryl)serine). The tract at residues 87–121 is disordered; the sequence is ASSSTSDNASDKDSSLDDSETGALTPTTDAGSSLA. Residues 108 to 121 show a composition bias toward polar residues; the sequence is GALTPTTDAGSSLA. A condensation 1 region spans residues 144–568; it reads QAVVPCSAIQ…LLSPGEVSQL (425 aa). An adenylation 1 region spans residues 593–997; sequence LQPGAAAVNS…GRRDTQVKIR (405 aa). Residues 1145 to 1221 form the Carrier 2 domain; it reads EPSTETEFKL…DLARAVESRV (77 aa). S1182 is modified (O-(pantetheine 4'-phosphoryl)serine). The disordered stretch occupies residues 1226–1247; sequence DEEDPAPFSVWRESRGSEPSEE. The segment at 1266–1680 is condensation 2; sequence EDVLPCTALQ…LLSPEDVNQL (415 aa). Positions 1702-2097 are adenylation 2; that stretch reads EVARSRPGAA…GRIDTQIKIR (396 aa). Positions 2216-2294 constitute a Carrier 3 domain; the sequence is PPSTEMEKAL…DLAVLLEKRP (79 aa). An O-(pantetheine 4'-phosphoryl)serine modification is found at S2253.

The protein belongs to the NRP synthetase family.

The protein operates within secondary metabolite biosynthesis. Its function is as follows. Nonribosomal peptide synthetase; part of the inp gene cluster that mediates the biosynthesis of fellutamide B, a mycotoxin that acts as a proteasome inhibitor. In the first step of fellutabmide B biosynthesis inpC activates 3-hydroxydodecanoic acid to generate 3-hydroxydodecanoyl-AMP that is then loaded onto the T0 domain of inpB. The 3-hydroxydodecanoyl-S-phosphopantetheinyl-T0 is sequentially extended with L-Asn and L-Gln by the two CAT modules of inpB. The linear lipodipeptide from inpB is then transferred onto inpA for the addition of the third amino acid, L-Leu. Reductive releasing of the lipotripeptide by the TE domain of inpA produces (2S)-fellutamide B. InpF might be involved in the release and transfer of the lipodipeptide from inpB to inpA. The inp cluster-encoded proteasome subunit inpE confers resistance to internally produced fellutamides. The MFS efflux transporter inpD may contribute to fellutamide resistance as well. This Emericella nidulans (strain FGSC A4 / ATCC 38163 / CBS 112.46 / NRRL 194 / M139) (Aspergillus nidulans) protein is Nonribosomal peptide synthetase inpB.